Here is a 338-residue protein sequence, read N- to C-terminus: MLSALARPASAALRRSFSTSAQNNAKVAVLGASGGIGQPLSLLLKNSPLVSRLTLYDIAHTPGVAADLSHIETKAAVKGYLGPEQLPDCLKGCDVVVIPAGVPRKPGMTRDDLFNTNATIVATLTAACAQHCPEAMICVIANPVNSTIPITAEVFKKHGVYNPNKIFGVTTLDIVRANTFVAELKGLDPARVNVPVIGGHAGKTIIPLISQCTPKVDFPQDQLTALTGRIQEAGTEVVKAKAGAGSATLSMAYAGARFVFSLVDAMNGKEGVVECSFVKSQETECTYFSTPLLLGKKGIEKNLGIGKVSSFEEKMISDAIPELKASIKKGEDFVKTLK.

A mitochondrion-targeting transit peptide spans 1–24 (MLSALARPASAALRRSFSTSAQNN). NAD(+) is bound by residues 31-37 (GASGGIG) and Asp57. A glycan (O-linked (GlcNAc) serine) is linked at Ser33. Lys78 and Lys91 each carry N6-acetyllysine; alternate. An N6-succinyllysine; alternate mark is found at Lys78 and Lys91. Substrate-binding residues include Arg104 and Arg110. Residues Asn117 and 140–142 (IAN) contribute to the NAD(+) site. Asn142 contributes to the substrate binding site. Position 165 is an N6-acetyllysine (Lys165). Arg176 contributes to the substrate binding site. Lys185 carries the N6-acetyllysine; alternate modification. Lys185 carries the post-translational modification N6-succinyllysine; alternate. His200 (proton acceptor) is an active-site residue. Lys203 is modified (N6-succinyllysine). N6-acetyllysine; alternate occurs at positions 215 and 239. 2 positions are modified to N6-succinyllysine; alternate: Lys215 and Lys239. Lys239 is modified (N6-malonyllysine; alternate). Position 246 is a phosphoserine (Ser246). Met251 is an NAD(+) binding site. Lys269 bears the N6-succinyllysine mark. N6-acetyllysine; alternate is present on residues Lys296, Lys301, Lys307, Lys314, and Lys324. N6-succinyllysine; alternate occurs at positions 296, 301, 307, 314, and 324. Lys307 carries the post-translational modification N6-malonyllysine; alternate. A Phosphoserine modification is found at Ser326. An N6-acetyllysine; alternate mark is found at Lys328, Lys329, and Lys335. N6-succinyllysine; alternate is present on Lys328. Lys329 carries the post-translational modification N6-malonyllysine; alternate. Position 335 is an N6-succinyllysine; alternate (Lys335).

It belongs to the LDH/MDH superfamily. MDH type 1 family. In terms of assembly, homodimer. Acetylation is enhanced by up to 67% after treatment either with trichostin A (TSA) or with nicotinamide (NAM) with the appearance of tri- and tetraacetylations. Glucose also increases acetylation by about 60%.

It localises to the mitochondrion matrix. It carries out the reaction (S)-malate + NAD(+) = oxaloacetate + NADH + H(+). Its activity is regulated as follows. Enzyme activity is enhanced by acetylation. In Homo sapiens (Human), this protein is Malate dehydrogenase, mitochondrial (MDH2).